A 783-amino-acid polypeptide reads, in one-letter code: ATP-dependent zinc metalloprotease FtsH (783 aa).

The segment covering 1-16 (MSETPNTNEQNNPNNQ) has biased composition (low complexity). Residues 1–79 (MSETPNTNEQ…DKEEDFASRL (79 aa)) form a disordered region. Over 1-86 (MSETPNTNEQ…SRLNTRPPQR (86 aa)) the chain is Cytoplasmic. Residues 35–61 (MPERPERHNQADGAPKRPGDDDRKSER) are compositionally biased toward basic and acidic residues. The chain crosses the membrane as a helical span at residues 87 to 107 (ASIITIIIIFLVAFFIGSQMM). The Extracellular segment spans residues 108–233 (NMVHGEETDD…EYQVTLPSNV (126 aa)). Residues 234-254 (TEILISVLPMLLFAGLLIYFF) form a helical membrane-spanning segment. At 255–783 (SQMSKANNSQ…APQPPAAPQQ (529 aa)) the chain is on the cytoplasmic side. 325 to 332 (GPPGTGKT) provides a ligand contact to ATP. Residue H547 participates in Zn(2+) binding. Residue E548 is part of the active site. Zn(2+) contacts are provided by H551 and D623. Positions 738–771 (EAAAKAADQAEQPQVEAEPVAQVATPAAPVAPAV) are enriched in low complexity. The disordered stretch occupies residues 738–783 (EAAAKAADQAEQPQVEAEPVAQVATPAAPVAPAVPEAPQPPAAPQQ). The segment covering 772-783 (PEAPQPPAAPQQ) has biased composition (pro residues).

The protein in the central section; belongs to the AAA ATPase family. This sequence in the C-terminal section; belongs to the peptidase M41 family. As to quaternary structure, homohexamer. Zn(2+) serves as cofactor.

Its subcellular location is the cell membrane. In terms of biological role, acts as a processive, ATP-dependent zinc metallopeptidase for both cytoplasmic and membrane proteins. Plays a role in the quality control of integral membrane proteins. The sequence is that of ATP-dependent zinc metalloprotease FtsH from Slackia heliotrinireducens (strain ATCC 29202 / DSM 20476 / NCTC 11029 / RHS 1) (Peptococcus heliotrinreducens).